A 292-amino-acid polypeptide reads, in one-letter code: Bifunctional protein FolD (292 aa).

Residues 169-171 (GRS) and Ser-194 contribute to the NADP(+) site.

The protein belongs to the tetrahydrofolate dehydrogenase/cyclohydrolase family. Homodimer.

The catalysed reaction is (6R)-5,10-methylene-5,6,7,8-tetrahydrofolate + NADP(+) = (6R)-5,10-methenyltetrahydrofolate + NADPH. The enzyme catalyses (6R)-5,10-methenyltetrahydrofolate + H2O = (6R)-10-formyltetrahydrofolate + H(+). The protein operates within one-carbon metabolism; tetrahydrofolate interconversion. Its function is as follows. Catalyzes the oxidation of 5,10-methylenetetrahydrofolate to 5,10-methenyltetrahydrofolate and then the hydrolysis of 5,10-methenyltetrahydrofolate to 10-formyltetrahydrofolate. The chain is Bifunctional protein FolD from Nostoc punctiforme (strain ATCC 29133 / PCC 73102).